We begin with the raw amino-acid sequence, 226 residues long: Ribose-5-phosphate isomerase A (226 aa).

Residues 28 to 31 (TGST), 84 to 87 (DGAD), and 97 to 100 (KGLG) each bind substrate. The active-site Proton acceptor is Glu-106. Lys-124 is a binding site for substrate.

Belongs to the ribose 5-phosphate isomerase family. Homodimer.

It catalyses the reaction aldehydo-D-ribose 5-phosphate = D-ribulose 5-phosphate. Its pathway is carbohydrate degradation; pentose phosphate pathway; D-ribose 5-phosphate from D-ribulose 5-phosphate (non-oxidative stage): step 1/1. Catalyzes the reversible conversion of ribose-5-phosphate to ribulose 5-phosphate. This chain is Ribose-5-phosphate isomerase A, found in Deinococcus radiodurans (strain ATCC 13939 / DSM 20539 / JCM 16871 / CCUG 27074 / LMG 4051 / NBRC 15346 / NCIMB 9279 / VKM B-1422 / R1).